Reading from the N-terminus, the 1098-residue chain is Bifunctional helicase and thymine dioxygenase JBP2 (1098 aa).

Residues 1–540 (MLNGLTRVST…PPLFVPTRLA (540 aa)) form a thymine dioxygenase region. Fe cation is bound by residues His415, Asp417, and His465. Position 479 (Arg479) interacts with 2-oxoglutarate. The DNA Helicase stretch occupies residues 541–1098 (SHLAPVQLAA…RYQESVRESE (558 aa)). A Helicase ATP-binding domain is found at 555-730 (VERTEKQSGC…YRLVGWVNKG (176 aa)). 568-575 (MTMGLGKT) is a binding site for ATP. The DEAH box signature appears at 681 to 684 (DEGH). A Helicase C-terminal domain is found at 897 to 1057 (VLVDIVLRVQ…ALPDELEDCA (161 aa)).

This sequence in the C-terminal section; belongs to the SNF2/RAD54 helicase family. In the N-terminal section; belongs to the TET family. JBP2 subfamily. It depends on Fe(2+) as a cofactor.

It localises to the nucleus. It catalyses the reaction ATP + H2O = ADP + phosphate + H(+). The enzyme catalyses thymine + 2-oxoglutarate + O2 = 5-hydroxymethyluracil + succinate + CO2. Its function is as follows. Dioxygenase that catalyzes the first step of DNA base J (beta-d-glucosyl-HOMedU) biosynthesis by converting thymine to 5-hydroxymethyluracil (HOMedU). DNA base J is a hypermodified thymidine residue found in the genome of kinetoplastid parasites, which is localized primarily to repetitive DNA, namely the telomeres, and is implicated in the regulation of antigenic variation. Probably also acts as a DNA helicase. Recognizes and binds specific regions of the genome, hydrolyzes ATP and allows the DNA base J de novo synthesis. Involved in initial synthesis of DNA base J, JBP1 being able to act via the basal level of DNA base J and propagate further synthesis. In contrast to JBP1, it does not specifically bind DNA base J, however it binds chromatin. This Leishmania infantum protein is Bifunctional helicase and thymine dioxygenase JBP2 (JBP2).